We begin with the raw amino-acid sequence, 289 residues long: Ribosomal protein L11 methyltransferase (289 aa).

S-adenosyl-L-methionine is bound by residues Thr-135, Gly-156, Asp-179, and Asn-225.

Belongs to the methyltransferase superfamily. PrmA family.

The protein localises to the cytoplasm. The enzyme catalyses L-lysyl-[protein] + 3 S-adenosyl-L-methionine = N(6),N(6),N(6)-trimethyl-L-lysyl-[protein] + 3 S-adenosyl-L-homocysteine + 3 H(+). Methylates ribosomal protein L11. The protein is Ribosomal protein L11 methyltransferase of Chlorobaculum parvum (strain DSM 263 / NCIMB 8327) (Chlorobium vibrioforme subsp. thiosulfatophilum).